The following is a 525-amino-acid chain: Membrane-bound lytic murein transglycosylase F (525 aa).

The N-terminal stretch at 1–24 (MQIRHFNRLKRSVLLFASVLLLSA) is a signal peptide. The interval 25 to 284 (CQIESQPKSE…SLEEKYIGHI (260 aa)) is non-LT domain. Residues 286-525 (AFDYVDTRAF…VDEDLDQEEE (240 aa)) are LT domain. E329 is a catalytic residue. The tract at residues 506-525 (VSGASDITNEVDEDLDQEEE) is disordered. The segment covering 514–525 (NEVDEDLDQEEE) has biased composition (acidic residues).

This sequence in the N-terminal section; belongs to the bacterial solute-binding protein 3 family. It in the C-terminal section; belongs to the transglycosylase Slt family.

The protein resides in the cell outer membrane. The enzyme catalyses Exolytic cleavage of the (1-&gt;4)-beta-glycosidic linkage between N-acetylmuramic acid (MurNAc) and N-acetylglucosamine (GlcNAc) residues in peptidoglycan, from either the reducing or the non-reducing ends of the peptidoglycan chains, with concomitant formation of a 1,6-anhydrobond in the MurNAc residue.. Functionally, murein-degrading enzyme that degrades murein glycan strands and insoluble, high-molecular weight murein sacculi, with the concomitant formation of a 1,6-anhydromuramoyl product. Lytic transglycosylases (LTs) play an integral role in the metabolism of the peptidoglycan (PG) sacculus. Their lytic action creates space within the PG sacculus to allow for its expansion as well as for the insertion of various structures such as secretion systems and flagella. This chain is Membrane-bound lytic murein transglycosylase F, found in Vibrio parahaemolyticus serotype O3:K6 (strain RIMD 2210633).